A 115-amino-acid polypeptide reads, in one-letter code: NADH-ubiquinone oxidoreductase chain 3 (115 aa).

Transmembrane regions (helical) follow at residues 3 to 23, 55 to 75, and 84 to 104; these read FALI…ITFW, FFLV…LLPL, and LPLM…SLAY.

This sequence belongs to the complex I subunit 3 family. As to quaternary structure, core subunit of respiratory chain NADH dehydrogenase (Complex I) which is composed of 45 different subunits. Interacts with TMEM186. Interacts with TMEM242.

The protein localises to the mitochondrion inner membrane. It carries out the reaction a ubiquinone + NADH + 5 H(+)(in) = a ubiquinol + NAD(+) + 4 H(+)(out). In terms of biological role, core subunit of the mitochondrial membrane respiratory chain NADH dehydrogenase (Complex I) which catalyzes electron transfer from NADH through the respiratory chain, using ubiquinone as an electron acceptor. Essential for the catalytic activity of complex I. This chain is NADH-ubiquinone oxidoreductase chain 3, found in Homo sapiens (Human).